A 902-amino-acid chain; its full sequence is Cytosolic 10-formyltetrahydrofolate dehydrogenase (902 aa).

A hydrolase domain region spans residues 1-310 (MKIAVIGQSL…PASQFFKGSA (310 aa)). Residue Ser9 is modified to Phosphoserine. Lys38 is subject to N6-succinyllysine. Residue 88–90 (QFI) coordinates (6R)-10-formyltetrahydrofolate. Catalysis depends on His106, which acts as the Proton donor. (6R)-10-formyltetrahydrofolate is bound at residue Asp142. Positions 318-395 (EEELATAEAV…DFIQLLVRKL (78 aa)) constitute a Carrier domain. The residue at position 354 (Ser354) is an O-(pantetheine 4'-phosphoryl)serine. Residues 417-902 (TLQMPYQLFI…LRIKTVTFEY (486 aa)) form an aldehyde dehydrogenase domain region. NADP(+)-binding positions include 571 to 573 (IPW) and 597 to 600 (KPAQ). Ser629 and Ser631 each carry phosphoserine. NADP(+)-binding positions include 630-635 (GSLVGQ) and 650-651 (GS). Lys660 carries the post-translational modification N6-succinyllysine. The Proton acceptor role is filled by Glu673. Residue 673–674 (EL) coordinates NADP(+). Residue Cys707 is the Proton donor of the active site. Lys757 is an NADP(+) binding site. The residue at position 767 (Lys767) is an N6-succinyllysine. An NADP(+)-binding site is contributed by 804 to 806 (ESF). Ser825 is subject to Phosphoserine. Lys882 is modified (N6-acetyllysine).

In the N-terminal section; belongs to the GART family. This sequence in the C-terminal section; belongs to the aldehyde dehydrogenase family. ALDH1L subfamily. As to quaternary structure, homotetramer. In terms of processing, phosphopantetheinylation at Ser-354 by AASDHPPT is required for the formyltetrahydrofolate dehydrogenase activity. Highly expressed in liver (at protein level). Also expressed in pancreas, brain and lung (at protein level).

It is found in the cytoplasm. Its subcellular location is the cytosol. It carries out the reaction (6R)-10-formyltetrahydrofolate + NADP(+) + H2O = (6S)-5,6,7,8-tetrahydrofolate + CO2 + NADPH + H(+). Its function is as follows. Cytosolic 10-formyltetrahydrofolate dehydrogenase that catalyzes the NADP(+)-dependent conversion of 10-formyltetrahydrofolate to tetrahydrofolate and carbon dioxide. May also have an NADP(+)-dependent aldehyde dehydrogenase activity towards formaldehyde, acetaldehyde, propionaldehyde, and benzaldehyde. The polypeptide is Cytosolic 10-formyltetrahydrofolate dehydrogenase (Mus musculus (Mouse)).